The following is a 393-amino-acid chain: Na(+)/H(+) antiporter NhaA (393 aa).

A run of 11 helical transmembrane segments spans residues 24–44 (GGLV…SPLA), 58–78 (LSLL…LVGL), 96–116 (ILPG…YILF), 126–146 (GWAI…SLFG), 155–175 (IFLA…IALF), 178–198 (SDLN…LYGM), 214–234 (AVLW…GVLL), 267–287 (VAFI…FSGV), 300–320 (VAAG…FLLV), 338–358 (GVAA…LLAF), and 369–389 (MGIL…LATF).

This sequence belongs to the NhaA Na(+)/H(+) (TC 2.A.33) antiporter family.

Its subcellular location is the cell inner membrane. The enzyme catalyses Na(+)(in) + 2 H(+)(out) = Na(+)(out) + 2 H(+)(in). Its function is as follows. Na(+)/H(+) antiporter that extrudes sodium in exchange for external protons. The protein is Na(+)/H(+) antiporter NhaA of Rhizobium etli (strain ATCC 51251 / DSM 11541 / JCM 21823 / NBRC 15573 / CFN 42).